The following is a 233-amino-acid chain: C-type lectin domain-containing protein 87 (233 aa).

The first 20 residues, 1–20 (MRFFRFLVFPVIAGLSSVLA), serve as a signal peptide directing secretion. N-linked (GlcNAc...) asparagine glycosylation occurs at asparagine 26. An O-linked (Xyl...) (chondroitin sulfate) serine glycan is attached at serine 32. Asparagine 81 carries N-linked (GlcNAc...) asparagine glycosylation. The 131-residue stretch at 93-223 (FADSCYWIET…CTYLLYSICE (131 aa)) folds into the C-type lectin domain. 2 cysteine pairs are disulfide-bonded: cysteine 114/cysteine 222 and cysteine 193/cysteine 214. The N-linked (GlcNAc...) asparagine glycan is linked to asparagine 225.

In Caenorhabditis briggsae, this protein is C-type lectin domain-containing protein 87.